The chain runs to 414 residues: Myb1 protein (414 aa).

Myb-like domains lie at 242–266 (WNEVSEKLSNNQNAKECQKMWLYYG), 268–320 (FEDD…IKIN), and 328–381 (KVKL…TNLN).

The protein resides in the nucleus. Transcriptional activator. Has a role in the parasite erythrocytic cycle where it directly regulates key genes involved in cell cycle regulation and progression. Binds directly to Myb regulatory elements. The polypeptide is Myb1 protein (Plasmodium falciparum (isolate 3D7)).